A 58-amino-acid polypeptide reads, in one-letter code: MLGWTLMFLVVAIIAGLFGFTGIAGAAAGIAKIIFFLFIVLLVISLLVNALKGKAPRA.

2 helical membrane-spanning segments follow: residues 6–26 (LMFL…IAGA) and 28–48 (AGIA…SLLV).

Belongs to the UPF0391 family.

It localises to the cell membrane. This Shewanella sp. (strain MR-4) protein is UPF0391 membrane protein Shewmr4_2671.